The primary structure comprises 151 residues: uncharacterized protein (151 aa).

Residues 123-151 form a disordered region; sequence PAGQNAGTGPAQKLKTDETRCYERRGGSQ. A compositionally biased stretch (basic and acidic residues) spans 136–151; it reads LKTDETRCYERRGGSQ.

This is an uncharacterized protein from Triticum aestivum (Wheat).